The sequence spans 585 residues: Protein cereblon (585 aa).

Disordered stretches follow at residues 1 to 109 (MDEE…DLES) and 156 to 195 (FSQE…IGFD). Over residues 80–95 (QDDTASEGSHPSSDMS) the composition is skewed to polar residues. The segment covering 158-167 (QERRRSRTSE) has biased composition (basic and acidic residues). Residues 178–189 (VDPPPQQPPRPP) show a composition bias toward pro residues. The Lon N-terminal domain occupies 225-451 (HMLIFLHQHI…LIKSTFKDET (227 aa)). Residues 450–559 (ETLFFCRYCN…LAGSSVRIGK (110 aa)) form the CULT domain. The Zn(2+) site is built by cysteine 455, cysteine 458, cysteine 524, and cysteine 527.

This sequence belongs to the CRBN family. Likely a component of a DCX (DDB1-CUL4-X-box) protein ligase complex. May interact with pic/DDB1. Post-translationally, ubiquitinated. As to expression, expressed in the fat body (at protein level).

The protein localises to the nucleus. The protein operates within protein modification; protein ubiquitination. Functionally, substrate recognition component of a DCX (DDB1-CUL4-X-box) E3 protein ligase complex that mediates the ubiquitination and subsequent proteasomal degradation of target proteins. Has an essential role in mediating growth by negatively regulating insulin signaling. It also has a role in maintaining presynaptic function in the neuromuscular junction synapses of third-instar larvae. This is Protein cereblon from Drosophila melanogaster (Fruit fly).